The chain runs to 239 residues: MPNSQTSNSQPQVSEKDVDTGFRKGDDTFTHWRNVFNILTGRMTDEGIEQFRVARDLRNEAADCKRCEDQRDYLLQWSPIIRYMSDSIRQLGGDLSSHNIYCRRCTNRKAGGFDPEYGILICANEMKDQGHLEDTMAHEMVHAYDHLRFKVDWTNNLRHAACTEIRASSLSGECRWAREFFRRGQWKLTQQHQECVRRRAVLSVMARPGCQDKGHAEKVVNEVWDSCFRDTRPFDEIFR.

Polar residues predominate over residues 1–13 (MPNSQTSNSQPQV). The disordered stretch occupies residues 1–22 (MPNSQTSNSQPQVSEKDVDTGF). Histidine 138 contacts a divalent metal cation. Glutamate 139 is a catalytic residue. Histidine 142 is a binding site for a divalent metal cation.

The protein belongs to the peptidase M76 family.

It is found in the mitochondrion inner membrane. Its function is as follows. Has a dual role in the assembly of mitochondrial ATPase. Acts as a protease that removes N-terminal residues of mitochondrial ATPase CF(0) subunit 6 at the intermembrane space side. Also involved in the correct assembly of the membrane-embedded ATPase CF(0) particle, probably mediating association of subunit 6 with the subunit 9 ring. This chain is Mitochondrial inner membrane protease atp23 (atp23), found in Emericella nidulans (strain FGSC A4 / ATCC 38163 / CBS 112.46 / NRRL 194 / M139) (Aspergillus nidulans).